A 91-amino-acid chain; its full sequence is Protein xpaR7 (91 aa).

The polypeptide is Protein xpaR7 (xpaR7) (Bacillus licheniformis).